Here is a 231-residue protein sequence, read N- to C-terminus: Enolase-phosphatase E1 (231 aa).

It belongs to the HAD-like hydrolase superfamily. MasA/MtnC family. Monomer. It depends on Mg(2+) as a cofactor.

The enzyme catalyses 5-methylsulfanyl-2,3-dioxopentyl phosphate + H2O = 1,2-dihydroxy-5-(methylsulfanyl)pent-1-en-3-one + phosphate. The protein operates within amino-acid biosynthesis; L-methionine biosynthesis via salvage pathway; L-methionine from S-methyl-5-thio-alpha-D-ribose 1-phosphate: step 3/6. It participates in amino-acid biosynthesis; L-methionine biosynthesis via salvage pathway; L-methionine from S-methyl-5-thio-alpha-D-ribose 1-phosphate: step 4/6. Bifunctional enzyme that catalyzes the enolization of 2,3-diketo-5-methylthiopentyl-1-phosphate (DK-MTP-1-P) into the intermediate 2-hydroxy-3-keto-5-methylthiopentenyl-1-phosphate (HK-MTPenyl-1-P), which is then dephosphorylated to form the acireductone 1,2-dihydroxy-3-keto-5-methylthiopentene (DHK-MTPene). This is Enolase-phosphatase E1 from Stenotrophomonas maltophilia (strain R551-3).